The primary structure comprises 96 residues: Large ribosomal subunit protein bL28 (96 aa).

Positions 1–23 (MSRVCELSGKAPMTGNTVSHANN) are disordered.

Belongs to the bacterial ribosomal protein bL28 family.

In Cereibacter sphaeroides (strain ATCC 17025 / ATH 2.4.3) (Rhodobacter sphaeroides), this protein is Large ribosomal subunit protein bL28.